Consider the following 451-residue polypeptide: Trigger factor (451 aa).

Positions 173–258 (GDRVTLDFVG…LKKIEWAHLP (86 aa)) constitute a PPIase FKBP-type domain.

The protein belongs to the FKBP-type PPIase family. Tig subfamily.

The protein resides in the cytoplasm. The enzyme catalyses [protein]-peptidylproline (omega=180) = [protein]-peptidylproline (omega=0). In terms of biological role, involved in protein export. Acts as a chaperone by maintaining the newly synthesized protein in an open conformation. Functions as a peptidyl-prolyl cis-trans isomerase. This is Trigger factor from Cupriavidus necator (strain ATCC 17699 / DSM 428 / KCTC 22496 / NCIMB 10442 / H16 / Stanier 337) (Ralstonia eutropha).